An 828-amino-acid polypeptide reads, in one-letter code: BEN domain-containing protein 3 (828 aa).

Lysine 20 is covalently cross-linked (Glycyl lysine isopeptide (Lys-Gly) (interchain with G-Cter in SUMO); alternate). Lysine 20 participates in a covalent cross-link: Glycyl lysine isopeptide (Lys-Gly) (interchain with G-Cter in SUMO1); alternate. Lysine 20 participates in a covalent cross-link: Glycyl lysine isopeptide (Lys-Gly) (interchain with G-Cter in SUMO2); alternate. Residues lysine 41, lysine 56, lysine 58, lysine 73, lysine 128, lysine 129, lysine 137, lysine 142, and lysine 158 each participate in a glycyl lysine isopeptide (Lys-Gly) (interchain with G-Cter in SUMO2) cross-link. The Nuclear localization signal signature appears at 56-58 (KRK). Serine 164 carries the phosphoserine modification. The disordered stretch occupies residues 164–184 (SPSSLRLLNEPQKRDCGSTGA). Lysine 176 is covalently cross-linked (Glycyl lysine isopeptide (Lys-Gly) (interchain with G-Cter in SUMO2)). In terms of domain architecture, BEN 1 spans 242–343 (PPPEYQLTAA…DFFSRFWAQR (102 aa)). Position 379 is a phosphoserine (serine 379). The 101-residue stretch at 387–487 (ASDHVVDTQD…DELEGLGLDA (101 aa)) folds into the BEN 2 domain. Residue lysine 427 forms a Glycyl lysine isopeptide (Lys-Gly) (interchain with G-Cter in SUMO2) linkage. The tract at residues 483–504 (LGLDAGSEGDPPRDDCYDSSSL) is disordered. Serine 489 bears the Phosphoserine mark. A Glycyl lysine isopeptide (Lys-Gly) (interchain with G-Cter in SUMO); alternate cross-link involves residue lysine 512. Residue lysine 512 forms a Glycyl lysine isopeptide (Lys-Gly) (interchain with G-Cter in SUMO2); alternate linkage. Residue lysine 528 forms a Glycyl lysine isopeptide (Lys-Gly) (interchain with G-Cter in SUMO2) linkage. A BEN 3 domain is found at 548-650 (VPGADCLLSK…ERCRRRDTEQ (103 aa)). A Glycyl lysine isopeptide (Lys-Gly) (interchain with G-Cter in SUMO2) cross-link involves residue lysine 700. A BEN 4 domain is found at 715–816 (VPSPYLLSDK…ERCRRPNRKK (102 aa)).

As to quaternary structure, homooligomer, probably a homooctamer. Interacts with HDAC2 and HDAC3, but not HDAC1. Interacts with SALL4. Interacts with SMARCA5/SNF2H, BAZ2A/TIP5 and USP21. Interacts with the nucleosome remodeling and histone deacetylase (NuRD) repressor complex. Interacts (via BEN domains 1 and 3) with ERCC6L (via N-terminal TPR repeat); the interaction is direct. Post-translationally, sumoylated at Lys-20 by SUMO1 and at Lys-512 by SUMO1, SUMO2 and SUMO3. Sumoylation probably occurs sequentially, with that of Lys-20 preceding that of Lys-512. It does not alter association with heterochromatin, but is required for the repression of transcription. In terms of tissue distribution, expressed at least in heart, kidney, liver, ovary and spleen, with highest levels in spleen and lowest in heart. Expressed on the surface of T-cells.

It is found in the nucleus. Its subcellular location is the nucleolus. In terms of biological role, transcriptional repressor which associates with the NoRC (nucleolar remodeling complex) complex and plays a key role in repressing rDNA transcription. The sumoylated form modulates the stability of the NoRC complex component BAZ2A/TIP5 by controlling its USP21-mediated deubiquitination. Binds to unmethylated major satellite DNA and is involved in the recruitment of the Polycomb repressive complex 2 (PRC2) to major satellites. Stimulates the ERCC6L translocase and ATPase activities. The sequence is that of BEN domain-containing protein 3 (BEND3) from Homo sapiens (Human).